The sequence spans 1270 residues: MSSHNPTQRVNFASIKNPMEYADFLDVQLKSFKDFLQLDTPPEKRKKEGLYKVFAENFPIHDTRNNFVLEFLDYYIDPPRYTLDECISRGLTYNVPLKAKMKLYCTDPEHEDFETVIQDVYLGPIPYMTESGTFIINGAERVVVSQMHRSPGVFFSESVHPNGTKLFSARIIPFKGSWIEFATDINNVMYAYIDRKKKLPVTTLLRAIGFETDKDILNLFGIAEEVKVSKSTLKKYYGRKIAARVLNSWIEDLVDEETGEVVSMERYDVIVDRDELLTEDNVDQIIESGAKNILITKDDSELGLDYSVTTNTLQKDPSNSEKEAVYHIYKQLRNQDPVDDASAREVINSLFFSEKRYDLGDVGRYRINKKLGINIDEETKVLTTEDITAIIAHLVELMNSKQVVDDIDHLSNRRVRTVGEQLYNQFGIGLARMARTVRERMNVRDNEVFTPIDLINAKTISSVVNSFFGTNALSQFMDRTNPLAEITHKRRLSSLGPGGLSRDRAGFEVRDVHYTHYGRLCPIETPEGPNIGLISSLCVYAKINDLGFISTPYRKVVDGKVDFSENGVEYYTAEAEDDKTVAQGNAPLDENGKFIKDAVYARYGSDFPVVSPSEIDLMDVSPIQIASIAASLIPFLEHDDANRALMGSNMMRQAVPLIHSDAPIVGTGVEQKLVHDSRTQIVAEGAGTVEFVDASVIKIRYDRSEDDTFVSFEDNLKIYNLPKFRKTNQSTTIDLRPICRKGDRVEKGDILTEGYSTENGELALGRNVQVAYMPWKGYNYEDAIVLNERMVREDIFTSVHVDEYILEVRETKRGLEELTSDIPNVSEEATKDLDDRGIIRVGARVHPGDILIGKITPKGESDPTPEEKLLHAIFGDKAGDVKDASLKANPSLSGVVIKTHLFSKAMHSKKDKGGVREIVKKLDEEMEEKLAELRELMLKKLIQLTDNKLSNGIRNFEDTEIVPKGVKLTPAVCSKIEFGEVAIFNWTGDEHTDELVAKLISNYLRKAKEIESEYRRKKFDATIGDELPNGIIQIAKVLIAKKRKIQVGDKMAGRHGNKGIVSKIVRQEDMPFMEDGTPMDLCLNPLGVPSRMNLGQIFELSSMGSRRLDVKFATPIFDGASLDDLDQWTDKAGIPRYGKTYLYDGGTGEQFDQPATVGVTYFLKLGHMVDDKMHARSIGPYSLITQQPLGGKAQFGGQRFGEMEVWALEAYGAAHVLQEMLTIKSDDVVGRSKAYEAIVKGAPMPTPGIPESLNVLLHELKGLGLSFCME.

Belongs to the RNA polymerase beta chain family. The RNAP catalytic core consists of 2 alpha, 1 beta, 1 beta' and 1 omega subunit. When a sigma factor is associated with the core the holoenzyme is formed, which can initiate transcription.

The enzyme catalyses RNA(n) + a ribonucleoside 5'-triphosphate = RNA(n+1) + diphosphate. DNA-dependent RNA polymerase catalyzes the transcription of DNA into RNA using the four ribonucleoside triphosphates as substrates. The protein is DNA-directed RNA polymerase subunit beta of Porphyromonas cangingivalis.